Here is a 443-residue protein sequence, read N- to C-terminus: MSKTLYQKIYDSHIVYEDKNSEAILYIDLHLLHEVTSPQAFNALRNKKRKVRQSKKTFATMDHNVSTKIRSIHASGSMAQKQMEQLINNCTEFNIPLYDINNPNQGIVHVIAPEKGMTLPGMTIVCGDSHTSTHGAFGTLAFGIGTSEVEHVLATQTLKQKRFKNMKVEIIGEMPKFVTAKDIILFIIGKLGSSSGAGHVIEFCGNVIKNMSMEERMTICNMAVEMGAKSGLIAPDEITYKYLKDKIYSPFGIFWEKSLDYWKFLKSDKNAYFDKCVTVDISNLAPQITWGTNPDQVISIDEKIPDYNNINSIVKRKSAKSACEYMGLQSNTYLTNISIDKVFIGSCTNARIEDLRSASKILKNKKVAKHVTAIVVPGSGLVKNQAEEEGLDKIFIDAGFEWRLPGCSMCLGMNKDRLNFGERCASHSNRNFEGRQGRGGRTH.

Residues Cys-347, Cys-407, and Cys-410 each coordinate [4Fe-4S] cluster.

This sequence belongs to the aconitase/IPM isomerase family. LeuC type 1 subfamily. As to quaternary structure, heterodimer of LeuC and LeuD. [4Fe-4S] cluster is required as a cofactor.

The enzyme catalyses (2R,3S)-3-isopropylmalate = (2S)-2-isopropylmalate. It participates in amino-acid biosynthesis; L-leucine biosynthesis; L-leucine from 3-methyl-2-oxobutanoate: step 2/4. Catalyzes the isomerization between 2-isopropylmalate and 3-isopropylmalate, via the formation of 2-isopropylmaleate. In Buchnera aphidicola subsp. Uroleucon aeneum, this protein is 3-isopropylmalate dehydratase large subunit.